A 333-amino-acid chain; its full sequence is 5-formaminoimidazole-4-carboxamide-1-(beta)-D-ribofuranosyl 5'-monophosphate synthetase (333 aa).

Residues histidine 21 and serine 84 each coordinate 5-amino-1-(5-phospho-beta-D-ribosyl)imidazole-4-carboxamide. Residues 118–313 (MELLAAAGIP…YFDEPMDMGE (196 aa)) enclose the ATP-grasp domain. Residues 141–187 (PVIV…VPAY) and glutamate 209 contribute to the ATP site. Asparagine 229 is a binding site for 5-amino-1-(5-phospho-beta-D-ribosyl)imidazole-4-carboxamide. Mg(2+) is bound by residues glutamate 268 and glutamate 281.

It belongs to the phosphohexose mutase family. Mg(2+) is required as a cofactor. Requires Mn(2+) as cofactor.

It carries out the reaction 5-amino-1-(5-phospho-beta-D-ribosyl)imidazole-4-carboxamide + formate + ATP = 5-formamido-1-(5-phospho-D-ribosyl)imidazole-4-carboxamide + ADP + phosphate. Its pathway is purine metabolism; IMP biosynthesis via de novo pathway; 5-formamido-1-(5-phospho-D-ribosyl)imidazole-4-carboxamide from 5-amino-1-(5-phospho-D-ribosyl)imidazole-4-carboxamide (formate route): step 1/1. In terms of biological role, catalyzes the ATP- and formate-dependent formylation of 5-aminoimidazole-4-carboxamide-1-beta-d-ribofuranosyl 5'-monophosphate (AICAR) to 5-formaminoimidazole-4-carboxamide-1-beta-d-ribofuranosyl 5'-monophosphate (FAICAR) in the absence of folates. The chain is 5-formaminoimidazole-4-carboxamide-1-(beta)-D-ribofuranosyl 5'-monophosphate synthetase from Pyrobaculum calidifontis (strain DSM 21063 / JCM 11548 / VA1).